We begin with the raw amino-acid sequence, 442 residues long: D-serine dehydratase (442 aa).

K118 is subject to N6-(pyridoxal phosphate)lysine.

Belongs to the serine/threonine dehydratase family. DsdA subfamily. Monomer. It depends on pyridoxal 5'-phosphate as a cofactor.

It catalyses the reaction D-serine = pyruvate + NH4(+). This Escherichia coli O139:H28 (strain E24377A / ETEC) protein is D-serine dehydratase.